The sequence spans 331 residues: MDIYDDKGLQTIKLFNNEFDCIRNDIRELFKHVTDSDSIQLPMEDNSDIIENIRKILYRRLKNVECVDIDSTITFMKYDPNDDNKRTCSNWVPLTNNYMEYCLVIYLETPICGGKIKLYHPTGNIKSDKDIMFAKTLDFKSKKVLTGRKTIAVLDISVSYNRSMTTIHYNDDVDIDIHTDKNGKELCYCYITIDDHYLVDVETIGVIVNRSGKCLLVNNHLGIGIVKDKRISDSFGDVCMDTIFDFSEARELFSLTNDDNRNIAWDTDKLDDDTDIWTPVTEDDYKFLSRLVLYAKSQSDTVFDYYVLTGDTEPPTVFIFKVTRFYFNMPK.

It belongs to the poxviridae C4/C10 protein family.

This is Protein C10 from Vaccinia virus (strain Western Reserve) (VACV).